Reading from the N-terminus, the 110-residue chain is Hydrogenase maturation factor HypA (110 aa).

His2 lines the Ni(2+) pocket. The Zn(2+) site is built by Cys70, Cys73, Cys86, and Cys89.

The protein belongs to the HypA/HybF family.

Its function is as follows. Involved in the maturation of [NiFe] hydrogenases. Required for nickel insertion into the metal center of the hydrogenase. This Geobacter metallireducens (strain ATCC 53774 / DSM 7210 / GS-15) protein is Hydrogenase maturation factor HypA.